We begin with the raw amino-acid sequence, 283 residues long: Pantothenate synthetase (283 aa).

Met-34–His-41 is an ATP binding site. His-41 serves as the catalytic Proton donor. Gln-65 contributes to the (R)-pantoate binding site. Residue Gln-65 coordinates beta-alanine. Gly-152 to Asp-155 lines the ATP pocket. Gln-158 serves as a coordination point for (R)-pantoate. ATP-binding positions include Val-181 and Met-189–Arg-192.

This sequence belongs to the pantothenate synthetase family. Homodimer.

It is found in the cytoplasm. The catalysed reaction is (R)-pantoate + beta-alanine + ATP = (R)-pantothenate + AMP + diphosphate + H(+). It functions in the pathway cofactor biosynthesis; (R)-pantothenate biosynthesis; (R)-pantothenate from (R)-pantoate and beta-alanine: step 1/1. In terms of biological role, catalyzes the condensation of pantoate with beta-alanine in an ATP-dependent reaction via a pantoyl-adenylate intermediate. The polypeptide is Pantothenate synthetase (Nitrobacter hamburgensis (strain DSM 10229 / NCIMB 13809 / X14)).